Reading from the N-terminus, the 512-residue chain is Methionine--tRNA ligase (512 aa).

The short motif at 11–21 is the 'HIGH' region element; that stretch reads YYASGKPHIGH. Zn(2+)-binding residues include C126, C129, C143, and H147. Residues 301–305 carry the 'KMSKS' region motif; that stretch reads KMSKS. ATP is bound at residue K304.

The protein belongs to the class-I aminoacyl-tRNA synthetase family. MetG type 2A subfamily. As to quaternary structure, monomer. The cofactor is Zn(2+).

It localises to the cytoplasm. The enzyme catalyses tRNA(Met) + L-methionine + ATP = L-methionyl-tRNA(Met) + AMP + diphosphate. Functionally, is required not only for elongation of protein synthesis but also for the initiation of all mRNA translation through initiator tRNA(fMet) aminoacylation. The polypeptide is Methionine--tRNA ligase (metG) (Mycoplasma genitalium (strain ATCC 33530 / DSM 19775 / NCTC 10195 / G37) (Mycoplasmoides genitalium)).